The following is a 194-amino-acid chain: Imidazoleglycerol-phosphate dehydratase (194 aa).

It belongs to the imidazoleglycerol-phosphate dehydratase family.

The protein resides in the cytoplasm. It catalyses the reaction D-erythro-1-(imidazol-4-yl)glycerol 3-phosphate = 3-(imidazol-4-yl)-2-oxopropyl phosphate + H2O. It participates in amino-acid biosynthesis; L-histidine biosynthesis; L-histidine from 5-phospho-alpha-D-ribose 1-diphosphate: step 6/9. This is Imidazoleglycerol-phosphate dehydratase from Bacillus cereus (strain ATCC 14579 / DSM 31 / CCUG 7414 / JCM 2152 / NBRC 15305 / NCIMB 9373 / NCTC 2599 / NRRL B-3711).